We begin with the raw amino-acid sequence, 333 residues long: MDERLLSGESAYEDADLEYSLRPQTLRQYIGQDKAKHNLEVFIEAAKMREETLDHVLLYGPPGLGKTTLANIIANEMGVNVRTTSGPAIERPGDLAAVLTSLQPGDVLFIDEIHRLHRSIEEVLYPAMEDFCLDIVIGKGPSARSVRLDLPPFTLVGATTRAGALSAPLRDRFGVLSRLEYYTVDQLSAIVERTAEVFEVEIDSLAALEIARRARGTPRIANRLLRRVRDFAQVRGNGTVTMEITQMALELLQVDKLGLDHIDHKLLLGIIEKFHGGPVGLETVSATIGEESHTIEDVYEPYLLQIGFLQRTPRGRIVTPLAYEHFGMEMPKV.

The tract at residues 1-182 is large ATPase domain (RuvB-L); the sequence is MDERLLSGES…FGVLSRLEYY (182 aa). Residues Leu21, Arg22, Gly63, Lys66, Thr67, Thr68, 129–131, Arg172, Tyr182, and Arg219 each bind ATP; that span reads EDF. Position 67 (Thr67) interacts with Mg(2+). The small ATPAse domain (RuvB-S) stretch occupies residues 183 to 253; sequence TVDQLSAIVE…ITQMALELLQ (71 aa). The segment at 256-333 is head domain (RuvB-H); sequence KLGLDHIDHK…EHFGMEMPKV (78 aa). DNA-binding residues include Arg311 and Arg316.

This sequence belongs to the RuvB family. As to quaternary structure, homohexamer. Forms an RuvA(8)-RuvB(12)-Holliday junction (HJ) complex. HJ DNA is sandwiched between 2 RuvA tetramers; dsDNA enters through RuvA and exits via RuvB. An RuvB hexamer assembles on each DNA strand where it exits the tetramer. Each RuvB hexamer is contacted by two RuvA subunits (via domain III) on 2 adjacent RuvB subunits; this complex drives branch migration. In the full resolvosome a probable DNA-RuvA(4)-RuvB(12)-RuvC(2) complex forms which resolves the HJ.

The protein localises to the cytoplasm. It carries out the reaction ATP + H2O = ADP + phosphate + H(+). Functionally, the RuvA-RuvB-RuvC complex processes Holliday junction (HJ) DNA during genetic recombination and DNA repair, while the RuvA-RuvB complex plays an important role in the rescue of blocked DNA replication forks via replication fork reversal (RFR). RuvA specifically binds to HJ cruciform DNA, conferring on it an open structure. The RuvB hexamer acts as an ATP-dependent pump, pulling dsDNA into and through the RuvAB complex. RuvB forms 2 homohexamers on either side of HJ DNA bound by 1 or 2 RuvA tetramers; 4 subunits per hexamer contact DNA at a time. Coordinated motions by a converter formed by DNA-disengaged RuvB subunits stimulates ATP hydrolysis and nucleotide exchange. Immobilization of the converter enables RuvB to convert the ATP-contained energy into a lever motion, pulling 2 nucleotides of DNA out of the RuvA tetramer per ATP hydrolyzed, thus driving DNA branch migration. The RuvB motors rotate together with the DNA substrate, which together with the progressing nucleotide cycle form the mechanistic basis for DNA recombination by continuous HJ branch migration. Branch migration allows RuvC to scan DNA until it finds its consensus sequence, where it cleaves and resolves cruciform DNA. This is Holliday junction branch migration complex subunit RuvB from Bacillus anthracis (strain A0248).